We begin with the raw amino-acid sequence, 1454 residues long: Probable cleavage and polyadenylation specificity factor subunit 1 (1454 aa).

The segment at 736 to 765 (KQSNTRKRKRLGHDAIQSSRGGEQSDAIDP) is disordered.

The protein belongs to the CPSF1 family. CPSF is a heterotetramer composed of four distinct subunits 160 (cpsf-1), 100 (cpsf-2), 70 (cpsf-3), and 30 kDa (cpsf-4).

Its subcellular location is the nucleus. Functionally, CPSF plays a key role in pre-mRNA 3'-end formation, recognizing the AAUAAA signal sequence and interacting with poly(A)polymerase and other factors to bring about cleavage and poly(A) addition. This subunit is involved in the RNA recognition step of the polyadenylation reaction. The protein is Probable cleavage and polyadenylation specificity factor subunit 1 (cpsf-1) of Caenorhabditis elegans.